Consider the following 210-residue polypeptide: Prolactin-2 (210 aa).

The N-terminal stretch at 1–23 (MARRSQGTKLHLAVLCLVVSCHA) is a signal peptide. 2 disulfides stabilise this stretch: cysteine 69–cysteine 183 and cysteine 200–cysteine 210.

Belongs to the somatotropin/prolactin family.

It localises to the secreted. The chain is Prolactin-2 (prl2) from Oncorhynchus tshawytscha (Chinook salmon).